A 109-amino-acid chain; its full sequence is Spermidine export protein MdtI (109 aa).

The next 4 membrane-spanning stretches (helical) occupy residues 6–26, 36–56, 64–84, and 88–108; these read FYPI…NILL, WLGI…AQAV, AYAM…WILF, and LNYK…MIKL.

This sequence belongs to the drug/metabolite transporter (DMT) superfamily. Small multidrug resistance (SMR) (TC 2.A.7.1) family. MdtI subfamily. Forms a complex with MdtJ.

Its subcellular location is the cell inner membrane. Its function is as follows. Catalyzes the excretion of spermidine. The protein is Spermidine export protein MdtI of Yersinia pseudotuberculosis serotype I (strain IP32953).